Consider the following 103-residue polypeptide: Sec-independent protein translocase protein TatA (103 aa).

The helical transmembrane segment at 1–21 (MGNIFSPTHLIIILLLILLLF) threads the bilayer. A disordered region spans residues 48-103 (EESIEDKVEMADTSQVINEESQQSQPLSVKRAAIRRKASSDSKGGKASIAKKQRVK). Residues 59 to 74 (DTSQVINEESQQSQPL) are compositionally biased toward polar residues.

Belongs to the TatA/E family. The Tat system comprises two distinct complexes: a TatABC complex, containing multiple copies of TatA, TatB and TatC subunits, and a separate TatA complex, containing only TatA subunits. Substrates initially bind to the TatABC complex, which probably triggers association of the separate TatA complex to form the active translocon.

The protein localises to the cell inner membrane. Its function is as follows. Part of the twin-arginine translocation (Tat) system that transports large folded proteins containing a characteristic twin-arginine motif in their signal peptide across membranes. TatA could form the protein-conducting channel of the Tat system. This Bartonella tribocorum (strain CIP 105476 / IBS 506) protein is Sec-independent protein translocase protein TatA.